Here is a 48-residue protein sequence, read N- to C-terminus: 2-deoxy-glucose resistant protein 1, mitochondrial (48 aa).

Residues 1 to 28 constitute a mitochondrion transit peptide; the sequence is MQVGFVSQTNCRSFPACIVFLFQMSQRQ.

The protein localises to the mitochondrion. This is 2-deoxy-glucose resistant protein 1, mitochondrial (DGR1) from Saccharomyces cerevisiae (strain ATCC 204508 / S288c) (Baker's yeast).